Consider the following 699-residue polypeptide: Mannan-binding lectin serine protease 1 (699 aa).

Residues 1–19 (MRWLLLYYALCFSLSKASA) form the signal peptide. Residues 20–138 (HTVELNNMFG…TGFDAHYMAV (119 aa)) form the CUB 1 domain. Positions 20 to 184 (HTVELNNMFG…HTDNRTCRVE (165 aa)) are homodimerization. The segment at 20-184 (HTVELNNMFG…HTDNRTCRVE (165 aa)) is interaction with MBL2. An interaction with FCN2 region spans residues 20 to 278 (HTVELNNMFG…STQSHSVLIL (259 aa)). N49 is a glycosylation site (N-linked (GlcNAc...) asparagine). 7 residues coordinate Ca(2+): E68, D76, D121, S123, D139, V140, and E142. The cysteines at positions 73 and 91 are disulfide-linked. The 44-residue stretch at 139–182 (DVDECKEREDEELSCDHYCHNYIGGYYCSCRFGYILHTDNRTCR) folds into the EGF-like; calcium-binding domain. Intrachain disulfides connect C143/C157, C153/C166, C168/C181, and C185/C212. Ca(2+)-binding residues include N159, Y160, and G163. N159 is modified ((3R)-3-hydroxyasparagine). N178 carries N-linked (GlcNAc...) (complex) asparagine glycosylation. The CUB 2 domain maps to 185–297 (CSDNLFTQRT…RGWRLSYRAA (113 aa)). 4 residues coordinate Ca(2+): E235, D245, D282, and S284. Cysteines 242 and 260 form a disulfide. Sushi domains follow at residues 299 to 364 (NECP…TCKI) and 365 to 434 (VDCR…TCLP). Cystine bridges form between C301–C349, C329–C362, C367–C414, C397–C432, C436–C572, and C475–C491. N385 carries an N-linked (GlcNAc...) (complex) asparagine glycan. N-linked (GlcNAc...) asparagine glycosylation occurs at N407. Residues 449–696 (IFNGRPAQKG…NKDWIQRVTG (248 aa)) form the Peptidase S1 domain. The active-site Charge relay system is H490. An N-linked (GlcNAc) asparagine glycan is attached at L533. The active-site Charge relay system is the D552. E599 carries an N-linked (GlcNAc) asparagine glycan. Intrachain disulfides connect C614–C631 and C642–C672. S646 (charge relay system) is an active-site residue.

It belongs to the peptidase S1 family. Homodimer. Interacts with the oligomeric lectins MBL2, FCN2 and FCN3; triggers the lectin pathway of complement through activation of C3. Interacts with SERPING1. Interacts with COLEC11; probably triggers the lectin pathway of complement. In terms of processing, the iron and 2-oxoglutarate dependent 3-hydroxylation of aspartate and asparagine is (R) stereospecific within EGF domains. N-glycosylated. Some N-linked glycan are of the complex-type. Post-translationally, autoproteolytic processing of the proenzyme produces the active enzyme composed on the heavy and the light chain held together by a disulfide bond. Isoform 1 but not isoform 2 is activated through autoproteolytic processing. As to expression, protein of the plasma which is primarily expressed by liver.

It is found in the secreted. With respect to regulation, inhibited by SERPING1 and A2M. Functionally, functions in the lectin pathway of complement, which performs a key role in innate immunity by recognizing pathogens through patterns of sugar moieties and neutralizing them. The lectin pathway is triggered upon binding of mannan-binding lectin (MBL) and ficolins to sugar moieties which leads to activation of the associated proteases MASP1 and MASP2. Functions as an endopeptidase and may activate MASP2 or C2 or directly activate C3 the key component of complement reaction. Isoform 2 may have an inhibitory effect on the activation of the lectin pathway of complement or may cleave IGFBP5. Also plays a role in development. The polypeptide is Mannan-binding lectin serine protease 1 (MASP1) (Homo sapiens (Human)).